The primary structure comprises 526 residues: MTSFFDSESPSNVAEYSVSELSGSIKRTIEQTFEHVRVRGEISGYRGPHSSGHAYFTLKDDRARIDAVVWKGTFARLKFRPEEGMEVIATGRVTTFPGSSKYQVVIDALEPAGAGALMALIEERKRKLAAEGLFDAGRKRPLPFMPKVIGVVTSPTGAVIRDILHRIADRFPVHVLVWPVRVQGDGACEEIVAAIEGFNALQPGGPIARPDVLIVARGGGSLEDLWCFNDEAMVRAAAGSAIPLISAVGHETDWTLIDHAADQRAPTPTGAAEMAVPVKADLEAQLASLSARLKGAAVRQMDNRRQTLRSLARALPSLDQLLALPRRRFDEAAAGLGRGLQMNTANKRRSFERSAAHLRPDLLTARIVDRRQRVVDAVNRAERIVERQVHRGAARVASADASLRALPSRLIGQVHRASDRVSAMSRRADAAIAADLRRLKSAVAAQDRVLQSLSYRNVLQRGFALVRDAAGEPVKQAAAVHSGMALSVEFADGRVAAVAGEDGTPSQAPKKRPARAGEPTKQGSLF.

The segment at 499-526 (AGEDGTPSQAPKKRPARAGEPTKQGSLF) is disordered.

The protein belongs to the XseA family. Heterooligomer composed of large and small subunits.

It is found in the cytoplasm. It carries out the reaction Exonucleolytic cleavage in either 5'- to 3'- or 3'- to 5'-direction to yield nucleoside 5'-phosphates.. In terms of biological role, bidirectionally degrades single-stranded DNA into large acid-insoluble oligonucleotides, which are then degraded further into small acid-soluble oligonucleotides. This chain is Exodeoxyribonuclease 7 large subunit, found in Sinorhizobium medicae (strain WSM419) (Ensifer medicae).